The chain runs to 376 residues: uncharacterized protein (376 aa).

It belongs to the NAD(P)-dependent epimerase/dehydratase family.

This is an uncharacterized protein from Mycobacterium bovis (strain ATCC BAA-935 / AF2122/97).